The primary structure comprises 508 residues: MGLPWYRVHTVVLNDPGRLLAVHIMHTALVSGWAGSMALYELAVFDPSDPVLDPMWRQGMFVIPFMTRLGITDSWGGWSISGGTVTNPGIWSYEGVAGTHIVFSGLCFLAAIWHWVYWDLEIFSDERTGKPSLDLPKIFGIHLFLAGVACFGFGAFHVTGLYGPGIWVSDPYGLTGKVQAVNPAWGAEGFDPFVPGGIASHHIAAGTLGILAGLFHLSVRPPQRLYKGLRMGNIETVLSSSIAAVFFAAFVVAGTMWYGSATTPIELFGPTRYQWDQGYFQQEIYRRVSNGLAENLSLSEAWSKIPEKLAFYDYIGNNPAKGGLFRAGSMDNGDGIAVGWLGHPVFRDKEGRELFVRRMPTFFETFPVVLVDEEGIVRADVPFRRAESKYSVEQVGVTVEFYGGELNGVSYSDPATVKKYARRSQLGEIFELDRATLKSDGVFRSSPRGWFTFGHATFALLFFFGHIWHGARTLFRDVFAGIDPDLDAQVEFGTFQKVGDPTTRKQAA.

6 consecutive transmembrane segments (helical) span residues 21–36, 101–115, 140–156, 203–218, 237–252, and 457–472; these read AVHI…WAGS, IVFS…IWHW, GIHL…FGAF, IAAG…FHLS, VLSS…AFVV, and TFAL…HGAR.

Belongs to the PsbB/PsbC family. PsbB subfamily. PSII is composed of 1 copy each of membrane proteins PsbA, PsbB, PsbC, PsbD, PsbE, PsbF, PsbH, PsbI, PsbJ, PsbK, PsbL, PsbM, PsbT, PsbX, PsbY, PsbZ, Psb30/Ycf12, at least 3 peripheral proteins of the oxygen-evolving complex and a large number of cofactors. It forms dimeric complexes. Binds multiple chlorophylls. PSII binds additional chlorophylls, carotenoids and specific lipids. serves as cofactor.

Its subcellular location is the plastid. The protein localises to the chloroplast thylakoid membrane. Functionally, one of the components of the core complex of photosystem II (PSII). It binds chlorophyll and helps catalyze the primary light-induced photochemical processes of PSII. PSII is a light-driven water:plastoquinone oxidoreductase, using light energy to abstract electrons from H(2)O, generating O(2) and a proton gradient subsequently used for ATP formation. This is Photosystem II CP47 reaction center protein from Triticum aestivum (Wheat).